The following is an 87-amino-acid chain: Phosphoribosyl-ATP pyrophosphatase (87 aa).

The protein belongs to the PRA-PH family.

The protein resides in the cytoplasm. The catalysed reaction is 1-(5-phospho-beta-D-ribosyl)-ATP + H2O = 1-(5-phospho-beta-D-ribosyl)-5'-AMP + diphosphate + H(+). It functions in the pathway amino-acid biosynthesis; L-histidine biosynthesis; L-histidine from 5-phospho-alpha-D-ribose 1-diphosphate: step 2/9. This chain is Phosphoribosyl-ATP pyrophosphatase, found in Kocuria rhizophila (strain ATCC 9341 / DSM 348 / NBRC 103217 / DC2201).